Consider the following 148-residue polypeptide: Protoporphyrinogen IX oxidase (148 aa).

Transmembrane regions (helical) follow at residues 7–27 (YFLW…AALF), 58–78 (SFIA…MLLI), 86–106 (GGWL…HFYC), and 128–148 (FNEA…VKPF). A heme-binding site is contributed by His-15. Position 92 (Lys-92) interacts with heme.

The protein belongs to the HemJ family. As to quaternary structure, homodimer. Heme b is required as a cofactor.

Its subcellular location is the cell membrane. The enzyme catalyses protoporphyrinogen IX + 3 A = protoporphyrin IX + 3 AH2. The protein operates within porphyrin-containing compound metabolism; protoporphyrin-IX biosynthesis; protoporphyrin-IX from protoporphyrinogen-IX: step 1/1. Its function is as follows. Catalyzes the oxidation of protoporphyrinogen IX to protoporphyrin IX. Is involved in the biosynthesis of tetrapyrrole molecules like heme. Does not use oxygen or artificial electron acceptors such as menadione or benzoquinone. In Helicobacter pylori (strain ATCC 700392 / 26695) (Campylobacter pylori), this protein is Protoporphyrinogen IX oxidase.